Reading from the N-terminus, the 30-residue chain is Cycloviolacin-H1 (30 aa).

Positions 1 to 30 form a cross-link, cyclopeptide (Gly-Asn); that stretch reads GIPCGESCVYIPCLTSAIGCSCKSKVCYRN. Cystine bridges form between C4–C20, C8–C22, and C13–C27.

It belongs to the cyclotide family. Bracelet subfamily. Post-translationally, this is a cyclic peptide.

In terms of biological role, probably participates in a plant defense mechanism. This is Cycloviolacin-H1 from Viola hederacea (Australian violet).